A 221-amino-acid polypeptide reads, in one-letter code: Glutathione S-transferase alpha-5 (221 aa).

In terms of domain architecture, GST N-terminal spans 3–83; the sequence is GKPVLHYFDG…YIATKYNLYG (81 aa). Residue Lys4 is modified to N6-succinyllysine. Glutathione contacts are provided by residues Tyr9, Arg45, 54 to 55, and 67 to 68; these read QV and QT. Residues 85 to 207 enclose the GST C-terminal domain; sequence DMKERALIDM…LQPGSQRKPF (123 aa).

Belongs to the GST superfamily. Alpha family. Heterodimer of YC1 and YC2. Liver, nasal mucosa and epididymis.

The protein localises to the cytoplasm. It catalyses the reaction RX + glutathione = an S-substituted glutathione + a halide anion + H(+). Its function is as follows. Conjugation of reduced glutathione to a wide number of exogenous and endogenous hydrophobic electrophiles. Has substantial activity toward aflatoxin B1-8,9-epoxide. This is Glutathione S-transferase alpha-5 (Gsta5) from Rattus norvegicus (Rat).